Consider the following 213-residue polypeptide: NADH-quinone oxidoreductase subunit B 1 (213 aa).

Cys-82, Cys-83, Cys-148, and Cys-177 together coordinate [4Fe-4S] cluster.

Belongs to the complex I 20 kDa subunit family. In terms of assembly, NDH-1 is composed of 14 different subunits. Subunits NuoB, C, D, E, F, and G constitute the peripheral sector of the complex. [4Fe-4S] cluster is required as a cofactor.

It is found in the cell inner membrane. The catalysed reaction is a quinone + NADH + 5 H(+)(in) = a quinol + NAD(+) + 4 H(+)(out). NDH-1 shuttles electrons from NADH, via FMN and iron-sulfur (Fe-S) centers, to quinones in the respiratory chain. The immediate electron acceptor for the enzyme in this species is believed to be ubiquinone. Couples the redox reaction to proton translocation (for every two electrons transferred, four hydrogen ions are translocated across the cytoplasmic membrane), and thus conserves the redox energy in a proton gradient. The polypeptide is NADH-quinone oxidoreductase subunit B 1 (Koribacter versatilis (strain Ellin345)).